Reading from the N-terminus, the 77-residue chain is Metallothionein-like protein type 2 (77 aa).

The protein belongs to the metallothionein superfamily. Type 15 family. In terms of tissue distribution, expressed in the left, stem and flower, at very low levels in roots and is not detectable in mesophyll protoplasts.

In terms of biological role, metallothioneins have a high content of cysteine residues that bind various heavy metals. This chain is Metallothionein-like protein type 2 (MTI), found in Vicia faba (Broad bean).